Here is a 246-residue protein sequence, read N- to C-terminus: tRNA pseudouridine synthase A (246 aa).

Catalysis depends on D52, which acts as the Nucleophile. Y111 contributes to the substrate binding site.

Belongs to the tRNA pseudouridine synthase TruA family. As to quaternary structure, homodimer.

It carries out the reaction uridine(38/39/40) in tRNA = pseudouridine(38/39/40) in tRNA. Formation of pseudouridine at positions 38, 39 and 40 in the anticodon stem and loop of transfer RNAs. The chain is tRNA pseudouridine synthase A from Ehrlichia ruminantium (strain Welgevonden).